A 363-amino-acid polypeptide reads, in one-letter code: Flagellar P-ring protein (363 aa).

Residues methionine 1–alanine 21 form the signal peptide.

The protein belongs to the FlgI family. The basal body constitutes a major portion of the flagellar organelle and consists of four rings (L,P,S, and M) mounted on a central rod.

It is found in the periplasm. Its subcellular location is the bacterial flagellum basal body. In terms of biological role, assembles around the rod to form the L-ring and probably protects the motor/basal body from shearing forces during rotation. The polypeptide is Flagellar P-ring protein (Colwellia psychrerythraea (strain 34H / ATCC BAA-681) (Vibrio psychroerythus)).